Here is a 166-residue protein sequence, read N- to C-terminus: Regulator of ribonuclease activity A (166 aa).

The protein belongs to the RraA family. In terms of assembly, homotrimer. Binds to both RNA-binding sites in the C-terminal region of Rne and to RhlB.

The protein resides in the cytoplasm. Globally modulates RNA abundance by binding to RNase E (Rne) and regulating its endonucleolytic activity. Can modulate Rne action in a substrate-dependent manner by altering the composition of the degradosome. Modulates RNA-binding and helicase activities of the degradosome. The protein is Regulator of ribonuclease activity A of Mannheimia succiniciproducens (strain KCTC 0769BP / MBEL55E).